Here is a 1755-residue protein sequence, read N- to C-terminus: MESQQLSQHSHISHGSACASVTSKEVHTNQDPLDVSASKTEECEKASTKANSQQTTTPASSAVPENPHHASPQTAQSHSPQNGPYPQQCMMTQNQANPSGWSFYGHPSMIPYTPYQMSPMYFPPGPQSQFPQYPSSVGTPLSTPSPESGNTFTDSSSADSDMTSTKKYVRPPPMLTSPNDFPNWVKTYIKFLQNSNLGGIIPTVNGKPVRQITDDELTFLYNTFQIFAPSQFLPTWVKDILSVDYTDIMKILSKSIEKMQSDTQEANDIVTLANLQYNGSTPADAFETKVTNIIDRLNNNGIHINNKVACQLIMRGLSGEYKFLRYTRHRHLNMTVAELFLDIHAIYEEQQGSRNSKPNYRRNPSDEKNDSRSYTNTTKPKVIARNPQKTNNSKSKTARAHNVSTSNNSPSTDNDSISKSTTEPIQLNNKHDLHLGQKLTESTVNHTNHSDDELPGHLLLDSGASRTLIRSAHHIHSASSNPDINVVDAQKRNIPINAIGDLQFHFQDNTKTSIKVLHTPNIAYDLLSLNELAAVDITACFTKNVLERSDGTVLAPIVKYGDFYWVSKKYLLPSNISVPTINNVHTSESTRKYPYPFIHRMLAHANAQTIRYSLKNNTITYFNESDVDWSSAIDYQCPDCLIGKSTKHRHIKGSRLKYQNSYEPFQYLHTDIFGPVHNLPKSAPSYFISFTDETTKFRWVYPLHDRREDSILDVFTTILAFIKNQFQASVLVIQMDRGSEYTNRTLHKFLEKNGITPCYTTTADSRAHGVAERLNRTLLDDCRTQLQCSGLPNHLWFSAIEFSTIVRNSLASPKSKKSARQHAGLAGLDISTLLPFGQPVIVNDHNPNSKIHPRGIPGYALHPSRNSYGYIIYLPSLKKTVDTTNYVILQGKESRLDQFNYDALTFDEDLNRLTASYQSFIASNEIQQSDDLNIESDHDFQSDIELHPEQPRNVLSKAVSPTDSTPPSTHTEDSKRVSKTNIRAPREVDPNISESNILPSKKRSSTPQISNIESTGSGGMHKLNVPLLAPMSQSNTHESSHASKSKDFRHSDSYSENETNHTNVPISSTGGTNNKTVPQISDQETEKRIIHRSPSIDASPPENNSSHNIVPIKTPTTVSEQNTEESIIADLPLPDLPPESPTEFPDPFKELPPINSRQTNSSLGGIGDSNAYTTINSKKRSLEDNETEIKVSRDTWNTKNMRSLEPPRSKKRIHLIAAVKAVKSIKPIRTTLRYDEAITYNKDIKEKEKYIEAYHKEVNQLLKMKTWDTDEYYDRKEIDPKRVINSMFIFNKKRDGTHKARFVARGDIQHPDTYDSGMQSNTVHHYALMTSLSLALDNNYYITQLDISSAYLYADIKEELYIRPPPHLGMNDKLIRLKKSLYGLKQSGANWYETIKSYLIQQCGMEEVRGWSCVFKNSQVTICLFVDDMVLFSKNLNSNKRIIEKLKMQYDTKIINLGESDEEIQYDILGLEIKYQRGKYMKLGMENSLTEKIPKLNVPLNPKGRKLSAPGQPGLYIDQQELELEEDDYKMKVHEMQKLIGLASYVGYKFRFDLLYYINTLAQHILFPSKQVLDMTYELIQFIWNTRDKQLIWHKSKPVKPTNKLVVISDASYGNQPYYKSQIGNIYLLNGKVIGGKSTKASLTCTSTTEAEIHAISESVPLLNNLSYLIQELDKKPITKGLLTDSKSTISIIISNNEEKFRNRFFGTKAMRLRDEVSGNHLHVCYIETKKNIADVMTKPLPIKTFKLLTNKWIH.

Positions 1-16 (MESQQLSQHSHISHGS) are enriched in low complexity. Disordered regions lie at residues 1 to 93 (MESQ…MMTQ), 126 to 173 (PQSQ…RPPP), and 352 to 421 (GSRN…SKST). 3 stretches are compositionally biased toward polar residues: residues 48–60 (TKAN…TPAS), 71–93 (SPQT…MMTQ), and 127–152 (QSQF…GNTF). Low complexity predominate over residues 153–165 (TDSSSADSDMTST). Residues 299–401 (NNGIHINNKV…NSKSKTARAH (103 aa)) form an RNA-binding region. Residues 402–418 (NVSTSNNSPSTDNDSIS) are compositionally biased toward low complexity. A Phosphoserine modification is found at Ser416. The active-site For protease activity; shared with dimeric partner is Asp461. Residues 583 to 640 (NVHTSESTRKYPYPFIHRMLAHANAQTIRYSLKNNTITYFNESDVDWSSAIDYQCPDC) form an integrase-type zinc finger-like region. The region spanning 660-835 (NSYEPFQYLH…AGLDISTLLP (176 aa)) is the Integrase catalytic domain. 2 residues coordinate Mg(2+): Asp671 and Asp736. Disordered stretches follow at residues 956–1087 (SKAV…ETEK), 1092–1111 (RSPS…NIVP), and 1130–1186 (DLPL…EDNE). Positions 960 to 969 (SPTDSTPPST) are enriched in low complexity. Over residues 1005 to 1015 (STPQISNIEST) the composition is skewed to polar residues. Basic and acidic residues predominate over residues 1038–1053 (ESSHASKSKDFRHSDS). 2 stretches are compositionally biased toward polar residues: residues 1054 to 1082 (YSEN…QISD) and 1101 to 1111 (PENNSSHNIVP). The Bipartite nuclear localization signal motif lies at 1178 to 1212 (KKRSLEDNETEIKVSRDTWNTKNMRSLEPPRSKKR). The Reverse transcriptase Ty1/copia-type domain occupies 1338-1476 (NNYYITQLDI…DILGLEIKYQ (139 aa)). Positions 1346, 1427, 1428, 1610, 1652, and 1685 each coordinate Mg(2+). In terms of domain architecture, RNase H Ty1/copia-type spans 1610–1752 (DASYGNQPYY…IKTFKLLTNK (143 aa)).

The capsid protein forms a homotrimer, from which the VLPs are assembled. The protease is a homodimer, whose active site consists of two apposed aspartic acid residues. In terms of processing, initially, virus-like particles (VLPs) are composed of the structural unprocessed proteins Gag and Gag-Pol, and also contain the host initiator methionine tRNA (tRNA(i)-Met) which serves as a primer for minus-strand DNA synthesis, and a dimer of genomic Ty RNA. Processing of the polyproteins occurs within the particle and proceeds by an ordered pathway, called maturation. First, the protease (PR) is released by autocatalytic cleavage of the Gag-Pol polyprotein yielding capsid protein p45 and a Pol-p154 precursor protein. This cleavage is a prerequisite for subsequent processing of Pol-p154 at the remaining sites to release the mature structural and catalytic proteins. Maturation takes place prior to the RT reaction and is required to produce transposition-competent VLPs.

The protein localises to the cytoplasm. Its subcellular location is the nucleus. The catalysed reaction is DNA(n) + a 2'-deoxyribonucleoside 5'-triphosphate = DNA(n+1) + diphosphate. The enzyme catalyses Endonucleolytic cleavage to 5'-phosphomonoester.. Functionally, capsid protein (CA) is the structural component of the virus-like particle (VLP), forming the shell that encapsulates the retrotransposons dimeric RNA genome. The particles are assembled from trimer-clustered units and there are holes in the capsid shells that allow for the diffusion of macromolecules. CA also has nucleocapsid-like chaperone activity, promoting primer tRNA(i)-Met annealing to the multipartite primer-binding site (PBS), dimerization of Ty1 RNA and initiation of reverse transcription. Its function is as follows. The aspartyl protease (PR) mediates the proteolytic cleavages of the Gag and Gag-Pol polyproteins after assembly of the VLP. In terms of biological role, reverse transcriptase/ribonuclease H (RT) is a multifunctional enzyme that catalyzes the conversion of the retro-elements RNA genome into dsDNA within the VLP. The enzyme displays a DNA polymerase activity that can copy either DNA or RNA templates, and a ribonuclease H (RNase H) activity that cleaves the RNA strand of RNA-DNA heteroduplexes during plus-strand synthesis and hydrolyzes RNA primers. The conversion leads to a linear dsDNA copy of the retrotransposon that includes long terminal repeats (LTRs) at both ends. Integrase (IN) targets the VLP to the nucleus, where a subparticle preintegration complex (PIC) containing at least integrase and the newly synthesized dsDNA copy of the retrotransposon must transit the nuclear membrane. Once in the nucleus, integrase performs the integration of the dsDNA into the host genome. The polypeptide is Transposon Ty1-JR2 Gag-Pol polyprotein (TY1B-JR2) (Saccharomyces cerevisiae (strain ATCC 204508 / S288c) (Baker's yeast)).